The sequence spans 1394 residues: Coiled-coil domain-containing protein 7 (1394 aa).

A coiled-coil region spans residues 308–340 (LLDAEYKQIQRDFELLSEEKLVLENELQKLKDT). The disordered stretch occupies residues 345–375 (STNNRTKKAAKTVKKKDKGKSEDSEKKMSSE). A compositionally biased stretch (basic residues) spans 349-362 (RTKKAAKTVKKKDK). Positions 363–375 (GKSEDSEKKMSSE) are enriched in basic and acidic residues. Positions 383–421 (LDQVQKVARLEIENKVLQEQLKQALQEAEKAKHQLNYFL) form a coiled coil. Disordered stretches follow at residues 431 to 617 (EGKT…EVPD), 634 to 806 (EQMK…LEHQ), and 819 to 842 (NEKL…PMLK). Polar residues predominate over residues 437–446 (TMRVGNSQTE). The segment covering 447–462 (VKGEDSKTIPLEKETG) has biased composition (basic and acidic residues). Over residues 464–473 (SLVSDSGGQK) the composition is skewed to polar residues. A compositionally biased stretch (basic and acidic residues) spans 491–500 (LIEKSSEKKR). 3 stretches are compositionally biased toward polar residues: residues 503–513 (PAISDLSQILK), 521–538 (LESS…NKSP), and 546–571 (LTTV…NETV). The segment covering 583–600 (ESKKADVSEEQLQKKTEE) has biased composition (basic and acidic residues). The segment covering 663–679 (SRSQSETKNLEATGNES) has biased composition (polar residues). Over residues 695–707 (QDTKSKTEVEVKK) the composition is skewed to basic and acidic residues. Polar residues predominate over residues 711–721 (FQDNQLNTHNE). Residues 722–736 (VPNERLIVEHQESMS) are compositionally biased toward basic and acidic residues. A compositionally biased stretch (polar residues) spans 780–790 (KEQSTLKGQRI). Composition is skewed to basic and acidic residues over residues 791-806 (TTHE…LEHQ) and 830-842 (THGE…PMLK).

In terms of biological role, may play a role in tumorigenesis. This Macaca fascicularis (Crab-eating macaque) protein is Coiled-coil domain-containing protein 7 (CCDC7).